The primary structure comprises 623 residues: tRNA uridine 5-carboxymethylaminomethyl modification enzyme MnmG (623 aa).

FAD is bound by residues 11–16 (GAGHAG), V123, and S178. Residue 270–284 (GPRYCPSIETKIVTF) coordinates NAD(+). Residue Q367 participates in FAD binding.

The protein belongs to the MnmG family. As to quaternary structure, homodimer. Heterotetramer of two MnmE and two MnmG subunits. The cofactor is FAD.

It is found in the cytoplasm. Functionally, NAD-binding protein involved in the addition of a carboxymethylaminomethyl (cmnm) group at the wobble position (U34) of certain tRNAs, forming tRNA-cmnm(5)s(2)U34. This is tRNA uridine 5-carboxymethylaminomethyl modification enzyme MnmG from Phocaeicola vulgatus (strain ATCC 8482 / DSM 1447 / JCM 5826 / CCUG 4940 / NBRC 14291 / NCTC 11154) (Bacteroides vulgatus).